A 183-amino-acid polypeptide reads, in one-letter code: Large ribosomal subunit protein uL6 (183 aa).

It belongs to the universal ribosomal protein uL6 family. Part of the 50S ribosomal subunit.

Functionally, this protein binds to the 23S rRNA, and is important in its secondary structure. It is located near the subunit interface in the base of the L7/L12 stalk, and near the tRNA binding site of the peptidyltransferase center. The sequence is that of Large ribosomal subunit protein uL6 from Parabacteroides distasonis (strain ATCC 8503 / DSM 20701 / CIP 104284 / JCM 5825 / NCTC 11152).